The following is a 662-amino-acid chain: UvrABC system protein B (662 aa).

The 158-residue stretch at 31 to 188 (DNIEGGEKAQ…NDLVDIQFER (158 aa)) folds into the Helicase ATP-binding domain. Residue 44 to 51 (GATGTGKT) coordinates ATP. Residues 97–120 (YYDYYQPEAYVPSSDTYIEKDSSV) carry the Beta-hairpin motif. One can recognise a Helicase C-terminal domain in the interval 435-601 (QIDDLLGEIN…TIKKEIRDLI (167 aa)). A UVR domain is found at 626–661 (KDMIKKLEGQMQEAAGLLDFELAAQIRDMILEIKAM).

Belongs to the UvrB family. In terms of assembly, forms a heterotetramer with UvrA during the search for lesions. Interacts with UvrC in an incision complex.

It localises to the cytoplasm. The UvrABC repair system catalyzes the recognition and processing of DNA lesions. A damage recognition complex composed of 2 UvrA and 2 UvrB subunits scans DNA for abnormalities. Upon binding of the UvrA(2)B(2) complex to a putative damaged site, the DNA wraps around one UvrB monomer. DNA wrap is dependent on ATP binding by UvrB and probably causes local melting of the DNA helix, facilitating insertion of UvrB beta-hairpin between the DNA strands. Then UvrB probes one DNA strand for the presence of a lesion. If a lesion is found the UvrA subunits dissociate and the UvrB-DNA preincision complex is formed. This complex is subsequently bound by UvrC and the second UvrB is released. If no lesion is found, the DNA wraps around the other UvrB subunit that will check the other stand for damage. In Streptococcus sanguinis (strain SK36), this protein is UvrABC system protein B.